We begin with the raw amino-acid sequence, 185 residues long: Thymidine kinase (185 aa).

ATP contacts are provided by residues 10-17 (GPMYSGKT) and 83-86 (DEVQ). Glu84 serves as the catalytic Proton acceptor. Cys140, Cys143, Cys173, and Cys176 together coordinate Zn(2+).

It belongs to the thymidine kinase family. As to quaternary structure, homotetramer.

The protein localises to the cytoplasm. It catalyses the reaction thymidine + ATP = dTMP + ADP + H(+). In Pseudothermotoga lettingae (strain ATCC BAA-301 / DSM 14385 / NBRC 107922 / TMO) (Thermotoga lettingae), this protein is Thymidine kinase.